A 304-amino-acid chain; its full sequence is Ribosome-inactivating protein 9 (304 aa).

Glu-208 is a catalytic residue.

This sequence belongs to the ribosome-inactivating protein family. Type 1 RIP subfamily. Monomer. As to expression, accumulates to high levels in seeds.

It localises to the cytoplasm. The catalysed reaction is Endohydrolysis of the N-glycosidic bond at one specific adenosine on the 28S rRNA.. In terms of biological role, possesses features of some constitutive defense agent. The coordinate Opaque-2-controlled synthesis of this protein and the major seed storage proteins (zeins) may provide the germinating seedling with both nutritional benefits and protection against pathogen invasion of the surrounding endosperm. The protein is Ribosome-inactivating protein 9 (CRIP9) of Zea mays (Maize).